A 175-amino-acid chain; its full sequence is 2-oxo-4-hydroxy-4-carboxy-5-ureidoimidazoline decarboxylase (175 aa).

His-67 (proton donor) is an active-site residue. Residues Pro-68, 84-88 (SRGEQ), and 119-123 (FVICA) each bind substrate. Residues 173-175 (TKL) carry the Microbody targeting signal motif.

The protein belongs to the OHCU decarboxylase family. As to quaternary structure, homodimer.

Its subcellular location is the peroxisome. It catalyses the reaction 5-hydroxy-2-oxo-4-ureido-2,5-dihydro-1H-imidazole-5-carboxylate + H(+) = (S)-allantoin + CO2. The protein operates within purine metabolism; urate degradation; (S)-allantoin from urate: step 3/3. Functionally, catalyzes the stereoselective decarboxylation of 2-oxo-4-hydroxy-4-carboxy-5-ureidoimidazoline (OHCU) to (S)-allantoin. The sequence is that of 2-oxo-4-hydroxy-4-carboxy-5-ureidoimidazoline decarboxylase (urad) from Amia calva (Bowfin).